Reading from the N-terminus, the 214-residue chain is Calcineurin B homologous protein 3 (214 aa).

A lipid anchor (N-myristoyl glycine) is attached at Gly2. An EF-hand domain is found at 110 to 145 (CRKDKLRFLFNMYDTDNDSKITLEEYRKVVEELLSG). Ca(2+) is bound by residues Asp123, Asp125, Asp127, Lys129, and Glu134.

The protein belongs to the calcineurin regulatory subunit family. CHP subfamily. In terms of assembly, monomer. Homodimer.

The protein resides in the nucleus. The protein localises to the cytoplasm. It localises to the membrane. It is found in the cell membrane. Its subcellular location is the cell projection. The protein resides in the lamellipodium. The protein localises to the ruffle membrane. Its function is as follows. Functions as an integral cofactor in cell pH regulation by controlling plasma membrane-type Na(+)/H(+) exchange activity. Promotes the induction of hematopoietic stem cell differentiation toward megakaryocytic lineage. Essential for the coupling of ERK cascade activation with the expression of ETS family genes in megakaryocytic differentiation. Also involved in granulocytic differentiation in a ERK-dependent manner. Inhibits the phosphatase activity of calcineurin. The protein is Calcineurin B homologous protein 3 (tesc) of Xenopus tropicalis (Western clawed frog).